A 226-amino-acid polypeptide reads, in one-letter code: MAFPSVTSVTVENVTFPPTVKPPCSPNTFFLAGAGVRGLQIHHAFVKFTAICIYLQYDALSFLSVKWKTKSTHQLTESDQFFSDIVTGPFEKFMQVTMIKPLTGQQYSEKVAENCVAIWRSLGIYTDSEAEAIDKFLSVFKDLTFPPGSSILFTVSPNGSLTISFSGDETIPEVTSAVIENKLLSEAVLESMIGKNGVSPAAKQSLASRLSHLFKEPGVCDPQSHK.

Substrate contacts are provided by Thr49, Asn114, and Ser191.

It belongs to the chalcone isomerase family. Mostly expressed in flowers, and, to a lower extent, in roots, shoots, and seeds.

It carries out the reaction a chalcone = a flavanone.. It participates in secondary metabolite biosynthesis; flavonoid biosynthesis. Functionally, catalyzes the intramolecular cyclization of bicyclic chalcones into tricyclic (S)-flavanones. Responsible for the isomerization of 4,2',4',6'-tetrahydroxychalcone (also termed chalcone) into naringenin. This chain is Chalcone--flavanone isomerase 2-A (CHI2-A), found in Glycine max (Soybean).